We begin with the raw amino-acid sequence, 256 residues long: uncharacterized protein (256 aa).

Residues 211-256 form a disordered region; that stretch reads RKLQASVTTTPPKRCKLADRPAQTTQDTPRAPQPAPVRAQRPLFTL. Residues 246 to 256 show a composition bias toward low complexity; that stretch reads PVRAQRPLFTL.

This is an uncharacterized protein from Orgyia pseudotsugata (Douglas-fir tussock moth).